Consider the following 495-residue polypeptide: OTU domain-containing protein CG3251 (495 aa).

Positions 29-150 (LFRKHMLGDA…MGHFETVLTM (122 aa)) constitute an OTU domain. The Tudor domain maps to 302–364 (NFKVGAKCQV…HPLPPDEFKA (63 aa)). The span at 375-389 (LHNSQMGRQSVQGDQ) shows a compositional bias: polar residues. The interval 375 to 404 (LHNSQMGRQSVQGDQQGFVPDPMPGTAPSM) is disordered. The span at 395-404 (DPMPGTAPSM) shows a compositional bias: pro residues.

Its function is as follows. Putative OTU-type deubiquitinase. Catalytically inactive towards all diubiquitin molecules and long K48- and K63- linked ubiquitin chains in vitro. Potential modulator of apoptosis. In Drosophila melanogaster (Fruit fly), this protein is OTU domain-containing protein CG3251.